The following is an 85-amino-acid chain: Small ribosomal subunit protein uS17 (85 aa).

The protein belongs to the universal ribosomal protein uS17 family. In terms of assembly, part of the 30S ribosomal subunit.

One of the primary rRNA binding proteins, it binds specifically to the 5'-end of 16S ribosomal RNA. In Geobacter sp. (strain M21), this protein is Small ribosomal subunit protein uS17.